The chain runs to 189 residues: Cancer/testis antigen family 45 member A1 (189 aa).

Residues 1-23 (MTDKTEKVAVDPETVFKRPRECD) are compositionally biased toward basic and acidic residues. 2 disordered regions span residues 1–27 (MTDKTEKVAVDPETVFKRPRECDSPSY) and 83–118 (RMMQKPGSNAPVGGNVTSSFSGDDLECRETASSPKS).

This sequence belongs to the CT45 family. Testis specific. Expressed in cancer cell lines.

It is found in the nucleus. The sequence is that of Cancer/testis antigen family 45 member A1 from Homo sapiens (Human).